A 191-amino-acid polypeptide reads, in one-letter code: Octanoyltransferase (191 aa).

Residues 10–185 (ENSHDEIWLV…NILALLNNPP (176 aa)) form the BPL/LPL catalytic domain. Residues 49–56 (RGGQVTYH), 116–118 (SLG), and 129–131 (GLA) contribute to the substrate site. Cys147 functions as the Acyl-thioester intermediate in the catalytic mechanism.

Belongs to the LipB family.

It is found in the cytoplasm. The enzyme catalyses octanoyl-[ACP] + L-lysyl-[protein] = N(6)-octanoyl-L-lysyl-[protein] + holo-[ACP] + H(+). The protein operates within protein modification; protein lipoylation via endogenous pathway; protein N(6)-(lipoyl)lysine from octanoyl-[acyl-carrier-protein]: step 1/2. In terms of biological role, catalyzes the transfer of endogenously produced octanoic acid from octanoyl-acyl-carrier-protein onto the lipoyl domains of lipoate-dependent enzymes. Lipoyl-ACP can also act as a substrate although octanoyl-ACP is likely to be the physiological substrate. The chain is Octanoyltransferase from Salmonella choleraesuis (strain SC-B67).